An 82-amino-acid polypeptide reads, in one-letter code: Small ribosomal subunit protein bS16 (82 aa).

The protein belongs to the bacterial ribosomal protein bS16 family.

This is Small ribosomal subunit protein bS16 from Synechococcus elongatus (strain ATCC 33912 / PCC 7942 / FACHB-805) (Anacystis nidulans R2).